The following is a 484-amino-acid chain: Aldehyde dehydrogenase family 3 member A2 (484 aa).

At 1–463 (MERQVQRLRQ…FLLKQFNKGR (463 aa)) the chain is on the cytoplasmic side. 185–190 (GNTAVG) provides a ligand contact to NAD(+). Catalysis depends on residues glutamate 207 and cysteine 241. Serine 293 carries the phosphoserine modification. A helical membrane pass occupies residues 464 to 484 (LQLLLLVCLVAVAAVIVKDQL). Positions 481–484 (KDQL) match the Prevents secretion from ER motif.

Belongs to the aldehyde dehydrogenase family. In terms of assembly, homodimer. The N-terminus is blocked.

The protein resides in the microsome membrane. The protein localises to the endoplasmic reticulum membrane. It carries out the reaction an aldehyde + NAD(+) + H2O = a carboxylate + NADH + 2 H(+). The enzyme catalyses a fatty aldehyde + NAD(+) + H2O = a fatty acid + NADH + 2 H(+). The catalysed reaction is (2E)-hexadecenal + NAD(+) + H2O = (E)-hexadec-2-enoate + NADH + 2 H(+). It catalyses the reaction hexadecanoate + NADH + 2 H(+) = hexadecanal + NAD(+) + H2O. It carries out the reaction 22-oxodocosanoate + NAD(+) + H2O = docosanedioate + NADH + 2 H(+). The enzyme catalyses 2,6,10,14-tetramethylpentadecanal + NAD(+) + H2O = 2,6,10,14-tetramethylpentadecanoate + NADH + 2 H(+). The catalysed reaction is octadecanal + NAD(+) + H2O = octadecanoate + NADH + 2 H(+). It catalyses the reaction dodecanoate + NADH + 2 H(+) = dodecanal + NAD(+) + H2O. It carries out the reaction decanal + NAD(+) + H2O = decanoate + NADH + 2 H(+). The enzyme catalyses tetradecanal + NAD(+) + H2O = tetradecanoate + NADH + 2 H(+). The catalysed reaction is octanal + NAD(+) + H2O = octanoate + NADH + 2 H(+). It catalyses the reaction heptanal + NAD(+) + H2O = heptanoate + NADH + 2 H(+). It carries out the reaction (2E,6E)-farnesal + NAD(+) + H2O = (2E,6E)-farnesoate + NADH + 2 H(+). Its function is as follows. Catalyzes the oxidation of medium and long-chain aliphatic aldehydes to fatty acids. Active on a variety of saturated and unsaturated aliphatic aldehydes between 6 and 24 carbons in length. Responsible for conversion of the sphingosine 1-phosphate (S1P) degradation product hexadecenal to hexadecenoic acid. The protein is Aldehyde dehydrogenase family 3 member A2 (Aldh3a2) of Rattus norvegicus (Rat).